The chain runs to 261 residues: Phosphoadenosine phosphosulfate reductase (261 aa).

The protein belongs to the PAPS reductase family. CysH subfamily.

The catalysed reaction is [thioredoxin]-disulfide + sulfite + adenosine 3',5'-bisphosphate + 2 H(+) = [thioredoxin]-dithiol + 3'-phosphoadenylyl sulfate. It participates in sulfur metabolism; hydrogen sulfide biosynthesis; sulfite from sulfate: step 3/3. Its function is as follows. The NADP dependent reduction of PAPS into sulfite involves thioredoxin which probably plays the role of a thiol carrier. This is Phosphoadenosine phosphosulfate reductase (MET16) from Saccharomyces cerevisiae (strain ATCC 204508 / S288c) (Baker's yeast).